Here is a 106-residue protein sequence, read N- to C-terminus: Large ribosomal subunit protein eL30 (106 aa).

The protein belongs to the eukaryotic ribosomal protein eL30 family.

This is Large ribosomal subunit protein eL30 from Methanococcus maripaludis (strain C5 / ATCC BAA-1333).